A 756-amino-acid polypeptide reads, in one-letter code: ATP-dependent DNA helicase Hel308 (756 aa).

ATP is bound by residues Gln-29 and 47–54 (SATASGKT). One can recognise a Helicase ATP-binding domain in the interval 34–201 (RAGLLNGENI…WLNAKLVKSD (168 aa)). A DEAH box motif is present at residues 146-149 (DEIH). The region spanning 233-435 (SLINLTVDTL…PTSLKFHTLS (203 aa)) is the Helicase C-terminal domain.

The protein belongs to the helicase family. Hel308 subfamily. Monomer.

The catalysed reaction is Couples ATP hydrolysis with the unwinding of duplex DNA by translocating in the 3'-5' direction.. It carries out the reaction ATP + H2O = ADP + phosphate + H(+). Functionally, DNA-dependent ATPase and 3'-5' DNA helicase that may be involved in repair of stalled replication forks. The polypeptide is ATP-dependent DNA helicase Hel308 (Caldivirga maquilingensis (strain ATCC 700844 / DSM 13496 / JCM 10307 / IC-167)).